The primary structure comprises 261 residues: Probable electron transfer flavoprotein subunit beta (261 aa).

Residue Ser-2 is modified to N-acetylserine.

This sequence belongs to the ETF beta-subunit/FixA family. As to quaternary structure, heterodimer of an alpha and a beta subunit. Interacts with YFH1. FAD serves as cofactor. The cofactor is AMP.

It is found in the mitochondrion matrix. The electron transfer flavoprotein serves as a specific electron acceptor for several dehydrogenases, including five acyl-CoA dehydrogenases, glutaryl-CoA and sarcosine dehydrogenase. It transfers the electrons to the main mitochondrial respiratory chain via ETF-ubiquinone oxidoreductase (ETF dehydrogenase). The sequence is that of Probable electron transfer flavoprotein subunit beta (CIR1) from Saccharomyces cerevisiae (strain ATCC 204508 / S288c) (Baker's yeast).